The following is a 164-amino-acid chain: Peptidyl-prolyl cis-trans isomerase A-like 4C (164 aa).

One can recognise a PPIase cyclophilin-type domain in the interval 7-163 (FFDITVDGKP…KKITIADCGQ (157 aa)).

It belongs to the cyclophilin-type PPIase family. PPIase A subfamily.

It localises to the cytoplasm. The catalysed reaction is [protein]-peptidylproline (omega=180) = [protein]-peptidylproline (omega=0). Functionally, PPIases accelerate the folding of proteins. It catalyzes the cis-trans isomerization of proline imidic peptide bonds in oligopeptides. This is Peptidyl-prolyl cis-trans isomerase A-like 4C from Homo sapiens (Human).